The sequence spans 382 residues: Dodecanoyl-[acyl-carrier-protein] hydrolase, chloroplastic (382 aa).

Residues Met-1–Asn-83 constitute a chloroplast transit peptide. Active-site residues include Asn-283, His-285, and Cys-320.

It belongs to the acyl-ACP thioesterase family. As to quaternary structure, forms homodimers. As to expression, expressed in developing cotyledons. Not detected in leaves.

The protein resides in the plastid. It is found in the chloroplast. The enzyme catalyses dodecanoyl-[ACP] + H2O = dodecanoate + holo-[ACP] + H(+). Its function is as follows. Plays an essential role in chain termination during de novo fatty acid synthesis. High thioesterase activity for lauroyl-ACP versus other acyl-ACPs. This chain is Dodecanoyl-[acyl-carrier-protein] hydrolase, chloroplastic, found in Umbellularia californica (California bay laurel).